Reading from the N-terminus, the 336-residue chain is Ketol-acid reductoisomerase (NADP(+)) (336 aa).

The KARI N-terminal Rossmann domain occupies 1–182; the sequence is MAVIYYDKDA…GVTRAGVIET (182 aa). Residues 25 to 28, Arg-48, Ser-51, Ser-53, and 83 to 86 each bind NADP(+); these read YGSQ and DENQ. His-108 is an active-site residue. Gly-134 serves as a coordination point for NADP(+). Positions 183–328 constitute a KARI C-terminal knotted domain; sequence TFKEETETDL…KELRKMMPWL (146 aa). Mg(2+) contacts are provided by Asp-191, Glu-195, Glu-227, and Glu-231. Ser-252 serves as a coordination point for substrate.

It belongs to the ketol-acid reductoisomerase family. Requires Mg(2+) as cofactor.

The catalysed reaction is (2R)-2,3-dihydroxy-3-methylbutanoate + NADP(+) = (2S)-2-acetolactate + NADPH + H(+). It carries out the reaction (2R,3R)-2,3-dihydroxy-3-methylpentanoate + NADP(+) = (S)-2-ethyl-2-hydroxy-3-oxobutanoate + NADPH + H(+). It functions in the pathway amino-acid biosynthesis; L-isoleucine biosynthesis; L-isoleucine from 2-oxobutanoate: step 2/4. It participates in amino-acid biosynthesis; L-valine biosynthesis; L-valine from pyruvate: step 2/4. Functionally, involved in the biosynthesis of branched-chain amino acids (BCAA). Catalyzes an alkyl-migration followed by a ketol-acid reduction of (S)-2-acetolactate (S2AL) to yield (R)-2,3-dihydroxy-isovalerate. In the isomerase reaction, S2AL is rearranged via a Mg-dependent methyl migration to produce 3-hydroxy-3-methyl-2-ketobutyrate (HMKB). In the reductase reaction, this 2-ketoacid undergoes a metal-dependent reduction by NADPH to yield (R)-2,3-dihydroxy-isovalerate. The chain is Ketol-acid reductoisomerase (NADP(+)) from Thermotoga petrophila (strain ATCC BAA-488 / DSM 13995 / JCM 10881 / RKU-1).